Reading from the N-terminus, the 204-residue chain is Holliday junction branch migration complex subunit RuvA (204 aa).

The tract at residues 1-64 (MIGRLRGVVI…EDAQLLYGFN (64 aa)) is domain I. The domain II stretch occupies residues 65 to 143 (HKQERALFRE…GWVSHDLFSP (79 aa)). Residues 144–155 (AEISLPARESVL) are flexible linker. The segment at 156 to 204 (RAPDSSEEAASALVALGYKPQQASQIVSKIAKEGMSVEDIIRESLRSLV) is domain III.

It belongs to the RuvA family. As to quaternary structure, homotetramer. Forms an RuvA(8)-RuvB(12)-Holliday junction (HJ) complex. HJ DNA is sandwiched between 2 RuvA tetramers; dsDNA enters through RuvA and exits via RuvB. An RuvB hexamer assembles on each DNA strand where it exits the tetramer. Each RuvB hexamer is contacted by two RuvA subunits (via domain III) on 2 adjacent RuvB subunits; this complex drives branch migration. In the full resolvosome a probable DNA-RuvA(4)-RuvB(12)-RuvC(2) complex forms which resolves the HJ.

The protein resides in the cytoplasm. The RuvA-RuvB-RuvC complex processes Holliday junction (HJ) DNA during genetic recombination and DNA repair, while the RuvA-RuvB complex plays an important role in the rescue of blocked DNA replication forks via replication fork reversal (RFR). RuvA specifically binds to HJ cruciform DNA, conferring on it an open structure. The RuvB hexamer acts as an ATP-dependent pump, pulling dsDNA into and through the RuvAB complex. HJ branch migration allows RuvC to scan DNA until it finds its consensus sequence, where it cleaves and resolves the cruciform DNA. The protein is Holliday junction branch migration complex subunit RuvA of Aeromonas salmonicida (strain A449).